Consider the following 144-residue polypeptide: Snake venom vascular endothelial growth factor toxin VR-1 (144 aa).

The N-terminal stretch at Met-1–Gly-24 is a signal peptide. Gln-25 carries the pyrrolidone carboxylic acid modification. 3 disulfides stabilise this stretch: Cys-38/Cys-80, Cys-69/Cys-115, and Cys-73/Cys-117. Residues Arg-120–Arg-134 show a composition bias toward basic and acidic residues. Positions Arg-120–Asp-144 are disordered. Positions Arg-134 to Asp-144 are excised as a propeptide.

Belongs to the PDGF/VEGF growth factor family. Snake venom VEGF subfamily. Homodimer; disulfide-linked. Interacts with VEGF receptor-2 (KDR) with high affinity, but not with VEGF receptor-1 (Flt-1), VEGF receptor-3 (FLT4), and neuropilin-1 (NRP1). In terms of tissue distribution, expressed by the venom gland.

It is found in the secreted. Snake venom VEGFs may contribute to venom dispersion and prey subjugation by inducing vascular permeability and hypotension. This protein induces angiogenesis probably through VEGF receptor (KDR/VEGFR-2) signaling, as well as drastic hypotension. The hypotension is mediated by nitric oxide, which is produced by VEGF-activated endothelium NO synthase. May also induce vascular permeability. This is Snake venom vascular endothelial growth factor toxin VR-1 from Daboia russelii (Russel's viper).